We begin with the raw amino-acid sequence, 265 residues long: Phosphate import ATP-binding protein PstB 2 (265 aa).

The region spanning 13–260 (FRTENLNVYY…PTKQATRDYV (248 aa)) is the ABC transporter domain. 45–52 (GPSGCGKS) is a binding site for ATP.

The protein belongs to the ABC transporter superfamily. Phosphate importer (TC 3.A.1.7) family. As to quaternary structure, the complex is composed of two ATP-binding proteins (PstB), two transmembrane proteins (PstC and PstA) and a solute-binding protein (PstS).

Its subcellular location is the cell inner membrane. The catalysed reaction is phosphate(out) + ATP + H2O = ADP + 2 phosphate(in) + H(+). Functionally, part of the ABC transporter complex PstSACB involved in phosphate import. Responsible for energy coupling to the transport system. The polypeptide is Phosphate import ATP-binding protein PstB 2 (Synechococcus sp. (strain JA-2-3B'a(2-13)) (Cyanobacteria bacterium Yellowstone B-Prime)).